The chain runs to 405 residues: Exodeoxyribonuclease 7 large subunit (405 aa).

Belongs to the XseA family. As to quaternary structure, heterooligomer composed of large and small subunits.

Its subcellular location is the cytoplasm. The enzyme catalyses Exonucleolytic cleavage in either 5'- to 3'- or 3'- to 5'-direction to yield nucleoside 5'-phosphates.. Functionally, bidirectionally degrades single-stranded DNA into large acid-insoluble oligonucleotides, which are then degraded further into small acid-soluble oligonucleotides. In Halothermothrix orenii (strain H 168 / OCM 544 / DSM 9562), this protein is Exodeoxyribonuclease 7 large subunit.